The primary structure comprises 673 residues: tRNA 5-methylaminomethyl-2-thiouridine biosynthesis bifunctional protein MnmC (673 aa).

Residues 1-245 (MSHAPIQTAA…KREMLIGELP (245 aa)) are tRNA (mnm(5)s(2)U34)-methyltransferase. The interval 272–673 (IGGGVASALT…VRKLLKGRAV (402 aa)) is FAD-dependent cmnm(5)s(2)U34 oxidoreductase.

It in the N-terminal section; belongs to the methyltransferase superfamily. tRNA (mnm(5)s(2)U34)-methyltransferase family. In the C-terminal section; belongs to the DAO family. It depends on FAD as a cofactor.

The protein localises to the cytoplasm. The catalysed reaction is 5-aminomethyl-2-thiouridine(34) in tRNA + S-adenosyl-L-methionine = 5-methylaminomethyl-2-thiouridine(34) in tRNA + S-adenosyl-L-homocysteine + H(+). Functionally, catalyzes the last two steps in the biosynthesis of 5-methylaminomethyl-2-thiouridine (mnm(5)s(2)U) at the wobble position (U34) in tRNA. Catalyzes the FAD-dependent demodification of cmnm(5)s(2)U34 to nm(5)s(2)U34, followed by the transfer of a methyl group from S-adenosyl-L-methionine to nm(5)s(2)U34, to form mnm(5)s(2)U34. This Serratia proteamaculans (strain 568) protein is tRNA 5-methylaminomethyl-2-thiouridine biosynthesis bifunctional protein MnmC.